The chain runs to 240 residues: Flagellar L-ring protein (240 aa).

The signal sequence occupies residues 1 to 20; sequence MIRNFLLFFMPIYAILFLSG. Cysteine 21 carries the N-palmitoyl cysteine lipid modification. Residue cysteine 21 is the site of S-diacylglycerol cysteine attachment.

It belongs to the FlgH family. As to quaternary structure, the basal body constitutes a major portion of the flagellar organelle and consists of four rings (L,P,S, and M) mounted on a central rod.

It localises to the cell outer membrane. The protein resides in the bacterial flagellum basal body. Its function is as follows. Assembles around the rod to form the L-ring and probably protects the motor/basal body from shearing forces during rotation. The protein is Flagellar L-ring protein of Sulfurimonas denitrificans (strain ATCC 33889 / DSM 1251) (Thiomicrospira denitrificans (strain ATCC 33889 / DSM 1251)).